The primary structure comprises 1478 residues: Fanconi anemia group D2 protein homolog (1478 aa).

Positions 33-53 are disordered; it reads NISVESSSGGSEENIPASQEH. Positions 35–45 are enriched in low complexity; it reads SVESSSGGSEE. Lys595 participates in a covalent cross-link: Glycyl lysine isopeptide (Lys-Gly) (interchain with G-Cter in ubiquitin). Disordered regions lie at residues 896–918 and 1420–1478; these read NQNQ…PEPD and TPRS…SKCF. The segment covering 1429-1442 has biased composition (acidic residues); sequence ENSDDELPADDTSV. Residues 1468 to 1478 are compositionally biased toward basic residues; that stretch reads RSKSSSRSKCF.

This sequence belongs to the Fanconi anemia protein FANCD2 family. As to quaternary structure, homodimer; cannot be ubiquitinated and does not bind DNA. Part of a Fanci-Fancd2 heterodimeric complex that binds and scans dsDNA for DNA damage. Interacts with Fancl (via C-terminus). In terms of processing, monoubiquitinated by Fancl in response to ionising radiation.

It localises to the nucleus. Required for maintenance of chromosomal stability. Together with Fancl, and probably Fanci, involved in DNA repair of damage caused by agents that induce interstrand cross-links but not agents that cause double strand breaks. Required for S phase checkpoint activation in response to ionizing radiation induced DNA damage. The protein is Fanconi anemia group D2 protein homolog of Drosophila melanogaster (Fruit fly).